Here is a 724-residue protein sequence, read N- to C-terminus: Protein-glutamine gamma-glutamyltransferase 5 (724 aa).

N-acetylalanine is present on alanine 2. Active-site residues include cysteine 283, histidine 342, and aspartate 365. The Ca(2+) site is built by asparagine 405, aspartate 407, glutamate 453, and glutamate 458. Composition is skewed to polar residues over residues 473–486 and 495–505; these read RSQG…NPFS and ARSPDSPSLQP. The disordered stretch occupies residues 473–505; the sequence is RSQGPHQANSNPFSSVPPRHNSARSPDSPSLQP.

The protein belongs to the transglutaminase superfamily. Transglutaminase family. Ca(2+) serves as cofactor.

The protein resides in the cytoplasm. The enzyme catalyses L-glutaminyl-[protein] + L-lysyl-[protein] = [protein]-L-lysyl-N(6)-5-L-glutamyl-[protein] + NH4(+). Catalyzes the cross-linking of proteins and the conjugation of polyamines to proteins. Contributes to the formation of the cornified cell envelope of keratinocytes. This chain is Protein-glutamine gamma-glutamyltransferase 5 (Tgm5), found in Mus musculus (Mouse).